The chain runs to 444 residues: Tubulin beta-7 chain (444 aa).

Q11, E69, S138, G142, T143, G144, N204, and N226 together coordinate GTP. E69 contacts Mg(2+).

This sequence belongs to the tubulin family. Dimer of alpha and beta chains. A typical microtubule is a hollow water-filled tube with an outer diameter of 25 nm and an inner diameter of 15 nM. Alpha-beta heterodimers associate head-to-tail to form protofilaments running lengthwise along the microtubule wall with the beta-tubulin subunit facing the microtubule plus end conferring a structural polarity. Microtubules usually have 13 protofilaments but different protofilament numbers can be found in some organisms and specialized cells. Requires Mg(2+) as cofactor. As to expression, expressed in roots, leaf sheaths, and suspension cultured cells.

It is found in the cytoplasm. Its subcellular location is the cytoskeleton. Functionally, tubulin is the major constituent of microtubules, a cylinder consisting of laterally associated linear protofilaments composed of alpha- and beta-tubulin heterodimers. Microtubules grow by the addition of GTP-tubulin dimers to the microtubule end, where a stabilizing cap forms. Below the cap, tubulin dimers are in GDP-bound state, owing to GTPase activity of alpha-tubulin. In Oryza sativa subsp. japonica (Rice), this protein is Tubulin beta-7 chain (TUBB7).